Here is a 239-residue protein sequence, read N- to C-terminus: DNA repair protein RecO (239 aa).

Belongs to the RecO family.

In terms of biological role, involved in DNA repair and RecF pathway recombination. In Aromatoleum aromaticum (strain DSM 19018 / LMG 30748 / EbN1) (Azoarcus sp. (strain EbN1)), this protein is DNA repair protein RecO.